Consider the following 328-residue polypeptide: Tryptophan--tRNA ligase (328 aa).

ATP contacts are provided by residues Arg-8–Thr-10 and Gly-16–His-17. Positions Pro-9 to His-17 match the 'HIGH' region motif. Asp-136 provides a ligand contact to L-tryptophan. Residues Gly-148–Asp-150, Leu-186, and Lys-193–Ser-197 each bind ATP. The 'KMSKS' region signature appears at Lys-193 to Ser-197.

Belongs to the class-I aminoacyl-tRNA synthetase family. As to quaternary structure, homodimer.

It is found in the cytoplasm. The catalysed reaction is tRNA(Trp) + L-tryptophan + ATP = L-tryptophyl-tRNA(Trp) + AMP + diphosphate + H(+). Functionally, catalyzes the attachment of tryptophan to tRNA(Trp). This Thermotoga maritima (strain ATCC 43589 / DSM 3109 / JCM 10099 / NBRC 100826 / MSB8) protein is Tryptophan--tRNA ligase.